Reading from the N-terminus, the 318-residue chain is MRTTAVILSGPRDLGLQTIQLNEPAPGDIVVEITHSGISTGTEKLFYTGQMPPFPGMGYPLVPGYEAAGEVVEAAPDTGFRPGDRVFVPGSNCFAPTDAGPIRGLFGAATKRLVTPAHRAVRIDPALEAEGALLALAATARHALAGLNHVLPDLIVGHGTLGRLLARLTIAAGGEPPVVWETKAERRRHAEGYEVIDPATDQRRDYRSIYDASGDPKLIDSLVMRLAKGGEIVLAGFYTEPVAFTFVPAFMKEARLRIAAEWQPEDMVATRALIESGALSLANLITHTRPASEAAEAYATAFSDPDCLKMILDWRATA.

Its pathway is porphyrin-containing compound metabolism; bacteriochlorophyll biosynthesis (light-independent). In terms of biological role, this protein catalyzes the penultimate step in bacteriochlorophyll a biosynthesis. The sequence is that of 2-desacetyl-2-hydroxyethyl bacteriochlorophyllide A dehydrogenase (bchC) from Cereibacter sphaeroides (strain ATCC 17023 / DSM 158 / JCM 6121 / CCUG 31486 / LMG 2827 / NBRC 12203 / NCIMB 8253 / ATH 2.4.1.) (Rhodobacter sphaeroides).